The primary structure comprises 66 residues: Large ribosomal subunit protein uL29 (66 aa).

This sequence belongs to the universal ribosomal protein uL29 family.

The protein is Large ribosomal subunit protein uL29 of Methylibium petroleiphilum (strain ATCC BAA-1232 / LMG 22953 / PM1).